We begin with the raw amino-acid sequence, 430 residues long: ATP-dependent RNA helicase cgh-1 (430 aa).

A Q motif motif is present at residues 43 to 71 (VEFEDFCLGRDLLMGIFEKGWEKPSPIQE). The Helicase ATP-binding domain maps to 74-244 (IGVALTGQDI…QKHMHKPYEI (171 aa)). 87-94 (AKNGTGKT) serves as a coordination point for ATP. Residues 192-195 (DEAD) carry the DEAD box motif. The 161-residue stretch at 254–414 (GVTQYYAFVQ…PIPKTVDPKL (161 aa)) folds into the Helicase C-terminal domain.

It belongs to the DEAD box helicase family. DDX6/DHH1 subfamily. Interacts with car-1 in a germline ribonucleoprotein complex. Interacts with ifet-1. Interacts with oma-1, which is a component of a ribonucleoprotein complex, in an RNA-dependent manner. In terms of tissue distribution, expression is restricted to two germline precursors Z2 and Z3 in L1 stage hermaphrodites, and is detectable specifically in the gonad at low levels into the L3 stage. Expression is significantly higher during the early L4 stage. In adults, expression remains gonad-specific and was not apparent in the somatically derived uterus. Expressed in germ granules (P granules); when associated with pgl-1.

It localises to the cytoplasm. The catalysed reaction is ATP + H2O = ADP + phosphate + H(+). Its function is as follows. Probable RNA helicase required for oocyte and sperm function. Also required to prevent the physiological germline apoptosis mechanism killing essentially all developing oocytes. The protein is ATP-dependent RNA helicase cgh-1 (cgh-1) of Caenorhabditis elegans.